Here is a 50-residue protein sequence, read N- to C-terminus: Defensin D2 (50 aa).

Intrachain disulfides connect Cys3/Cys50, Cys14/Cys35, Cys20/Cys44, and Cys24/Cys46.

Contains 4 disulfide bonds.

Its subcellular location is the secreted. Antimicrobial peptide active against fungi, Gram-positive and Gram-negative bacteria. Inhibits growth of hyphae in the fungi A.niger (IC(50)=3.5 ug/ml), B.sorokiniana (IC(50)=1.8 ug/ml), F.oxysporum (IC(50)=5.3 ug/ml), F.graminearum (IC(50)=6.9 ug/ml), F.culmorum (IC(50)=6.9 ug/ml) and B.cinerea (IC(50)=13.7 ug/ml). Has no effect on spore germination. Destroys spores in germinated conidia by disruption of cell walls and membranes in A.niger and B.sorokiniana. Causes vacuolization of germinated macro- and microconidia in F.oxysporum, F.graminearum and F.culmorum. Strongly inhibits growth of P.infestans on potato tubers above concentrations of 3.4 ug/ml. Inhibits growth of Gram-positive bacteria C.michiganensis and B.subtilis and of Gram-negative bacteria P.syringae, E.carotovora and E.coli. The sequence is that of Defensin D2 from Nigella sativa (Black cumin).